The chain runs to 442 residues: D-serine dehydratase (442 aa).

An N6-(pyridoxal phosphate)lysine modification is found at K118.

It belongs to the serine/threonine dehydratase family. DsdA subfamily. In terms of assembly, monomer. Requires pyridoxal 5'-phosphate as cofactor.

It catalyses the reaction D-serine = pyruvate + NH4(+). The sequence is that of D-serine dehydratase from Shigella dysenteriae serotype 1 (strain Sd197).